A 237-amino-acid polypeptide reads, in one-letter code: Glutathione S-transferase L1 (237 aa).

The GST N-terminal domain occupies 29-110 (GTTRLYISYT…YVDSNFDGPS (82 aa)). Residues 39–40 (CP), 67–68 (NR), 81–82 (KV), and 94–95 (ES) contribute to the glutathione site. Positions 112 to 232 (YPEDSAKREF…KTDSEYVVNY (121 aa)) constitute a GST C-terminal domain.

It belongs to the GST superfamily. Lambda family.

It localises to the cytoplasm. It is found in the cytosol. It carries out the reaction RX + glutathione = an S-substituted glutathione + a halide anion + H(+). In terms of biological role, catalyzes the glutathione-dependent reduction of S-glutathionylquercetin to quercetin. In vitro, possesses glutathione-dependent thiol transferase activity toward 2-hydroxyethyl disulfide (HED). The protein is Glutathione S-transferase L1 (GSTL1) of Arabidopsis thaliana (Mouse-ear cress).